We begin with the raw amino-acid sequence, 447 residues long: Tubulin beta-1 chain (447 aa).

Residues glutamine 11, glutamate 69, serine 138, glycine 142, threonine 143, glycine 144, asparagine 204, and asparagine 226 each coordinate GTP. Glutamate 69 contacts Mg(2+). The interval 424–447 (QYQDATAEEEGEGDEEEAEGEAAA) is disordered. Acidic residues predominate over residues 429–447 (TAEEEGEGDEEEAEGEAAA).

It belongs to the tubulin family. As to quaternary structure, dimer of alpha and beta chains. A typical microtubule is a hollow water-filled tube with an outer diameter of 25 nm and an inner diameter of 15 nM. Alpha-beta heterodimers associate head-to-tail to form protofilaments running lengthwise along the microtubule wall with the beta-tubulin subunit facing the microtubule plus end conferring a structural polarity. Microtubules usually have 13 protofilaments but different protofilament numbers can be found in some organisms and specialized cells. It depends on Mg(2+) as a cofactor.

It is found in the cytoplasm. Its subcellular location is the cytoskeleton. In terms of biological role, tubulin is the major constituent of microtubules, a cylinder consisting of laterally associated linear protofilaments composed of alpha- and beta-tubulin heterodimers. Microtubules grow by the addition of GTP-tubulin dimers to the microtubule end, where a stabilizing cap forms. Below the cap, tubulin dimers are in GDP-bound state, owing to GTPase activity of alpha-tubulin. In Cyanophora paradoxa, this protein is Tubulin beta-1 chain (TUBB1).